The sequence spans 407 residues: Imidazolonepropionase (407 aa).

Positions 68 and 70 each coordinate Fe(3+). Residues His-68 and His-70 each contribute to the Zn(2+) site. Positions 77, 140, and 173 each coordinate 4-imidazolone-5-propanoate. Tyr-140 contacts N-formimidoyl-L-glutamate. Position 238 (His-238) interacts with Fe(3+). His-238 provides a ligand contact to Zn(2+). 4-imidazolone-5-propanoate is bound at residue Gln-241. Asp-313 is a binding site for Fe(3+). Asp-313 provides a ligand contact to Zn(2+). N-formimidoyl-L-glutamate contacts are provided by Asn-315 and Gly-317. Thr-318 contacts 4-imidazolone-5-propanoate.

It belongs to the metallo-dependent hydrolases superfamily. HutI family. It depends on Zn(2+) as a cofactor. Fe(3+) serves as cofactor.

It localises to the cytoplasm. The enzyme catalyses 4-imidazolone-5-propanoate + H2O = N-formimidoyl-L-glutamate. It functions in the pathway amino-acid degradation; L-histidine degradation into L-glutamate; N-formimidoyl-L-glutamate from L-histidine: step 3/3. Functionally, catalyzes the hydrolytic cleavage of the carbon-nitrogen bond in imidazolone-5-propanoate to yield N-formimidoyl-L-glutamate. It is the third step in the universal histidine degradation pathway. The sequence is that of Imidazolonepropionase from Burkholderia multivorans (strain ATCC 17616 / 249).